A 156-amino-acid polypeptide reads, in one-letter code: Ribosomal RNA large subunit methyltransferase H (156 aa).

S-adenosyl-L-methionine is bound by residues Leu-73, Gly-104, and 123–128; that span reads VSSLTL.

It belongs to the RNA methyltransferase RlmH family. In terms of assembly, homodimer.

Its subcellular location is the cytoplasm. The catalysed reaction is pseudouridine(1915) in 23S rRNA + S-adenosyl-L-methionine = N(3)-methylpseudouridine(1915) in 23S rRNA + S-adenosyl-L-homocysteine + H(+). Functionally, specifically methylates the pseudouridine at position 1915 (m3Psi1915) in 23S rRNA. The chain is Ribosomal RNA large subunit methyltransferase H from Burkholderia mallei (strain NCTC 10247).